The sequence spans 85 residues: Small ribosomal subunit protein bS16 (85 aa).

It belongs to the bacterial ribosomal protein bS16 family.

In Pseudomonas syringae pv. tomato (strain ATCC BAA-871 / DC3000), this protein is Small ribosomal subunit protein bS16.